The primary structure comprises 147 residues: Large ribosomal subunit protein uL15 (147 aa).

Positions 16–63 are disordered; that stretch reads SSRARVGRGIGSGLGKTAGRGHKGSFARKGGGKIKPGFEGGQTPMQRR. Positions 23 to 33 are enriched in gly residues; that stretch reads RGIGSGLGKTA. Residues 34–47 are compositionally biased toward basic residues; it reads GRGHKGSFARKGGG.

The protein belongs to the universal ribosomal protein uL15 family. In terms of assembly, part of the 50S ribosomal subunit.

Its function is as follows. Binds to the 23S rRNA. This is Large ribosomal subunit protein uL15 from Xylella fastidiosa (strain Temecula1 / ATCC 700964).